The sequence spans 172 residues: Large ribosomal subunit protein uL10 (172 aa).

This sequence belongs to the universal ribosomal protein uL10 family. Part of the ribosomal stalk of the 50S ribosomal subunit. The N-terminus interacts with L11 and the large rRNA to form the base of the stalk. The C-terminus forms an elongated spine to which L12 dimers bind in a sequential fashion forming a multimeric L10(L12)X complex.

Its function is as follows. Forms part of the ribosomal stalk, playing a central role in the interaction of the ribosome with GTP-bound translation factors. The polypeptide is Large ribosomal subunit protein uL10 (Xanthobacter autotrophicus (strain ATCC BAA-1158 / Py2)).